Consider the following 195-residue polypeptide: Peptidyl-tRNA hydrolase (195 aa).

Tyrosine 17 provides a ligand contact to tRNA. Histidine 22 (proton acceptor) is an active-site residue. Residues tyrosine 68, asparagine 70, and asparagine 116 each coordinate tRNA.

Belongs to the PTH family. As to quaternary structure, monomer.

The protein localises to the cytoplasm. It catalyses the reaction an N-acyl-L-alpha-aminoacyl-tRNA + H2O = an N-acyl-L-amino acid + a tRNA + H(+). Functionally, hydrolyzes ribosome-free peptidyl-tRNAs (with 1 or more amino acids incorporated), which drop off the ribosome during protein synthesis, or as a result of ribosome stalling. Its function is as follows. Catalyzes the release of premature peptidyl moieties from peptidyl-tRNA molecules trapped in stalled 50S ribosomal subunits, and thus maintains levels of free tRNAs and 50S ribosomes. In Shewanella sp. (strain MR-4), this protein is Peptidyl-tRNA hydrolase.